The chain runs to 455 residues: Beta-1,4-mannosyltransferase bre-3 (455 aa).

It belongs to the glycosyltransferase 2 family.

It localises to the cytoplasm. It functions in the pathway protein modification; protein glycosylation. Functionally, glycosyltransferase with a proposed role in glycosphingolipid biosynthesis. Involved in susceptibility to pore-forming crystal toxins in conjunction with bre-1, bre-2 and bre-4. Involved in resistance to the nematotoxic C.cinerea galectin Cgl2. Has a role in determining brood size. This chain is Beta-1,4-mannosyltransferase bre-3, found in Caenorhabditis briggsae.